Consider the following 225-residue polypeptide: Ribonuclease 3 (225 aa).

Residues 7–132 (MKAFEARLGY…VIAAVYRDGG (126 aa)) form the RNase III domain. Residue Glu-45 participates in Mg(2+) binding. The active site involves Asp-49. Asp-118 and Glu-121 together coordinate Mg(2+). Glu-121 is a catalytic residue. Positions 157–225 (DAKTALQEWA…AARKLLDSLD (69 aa)) constitute a DRBM domain.

Belongs to the ribonuclease III family. As to quaternary structure, homodimer. Mg(2+) serves as cofactor.

Its subcellular location is the cytoplasm. The enzyme catalyses Endonucleolytic cleavage to 5'-phosphomonoester.. Functionally, digests double-stranded RNA. Involved in the processing of primary rRNA transcript to yield the immediate precursors to the large and small rRNAs (23S and 16S). Processes some mRNAs, and tRNAs when they are encoded in the rRNA operon. Processes pre-crRNA and tracrRNA of type II CRISPR loci if present in the organism. This is Ribonuclease 3 from Ruegeria pomeroyi (strain ATCC 700808 / DSM 15171 / DSS-3) (Silicibacter pomeroyi).